Reading from the N-terminus, the 263-residue chain is Homeobox protein CDX-1 (263 aa).

A disordered region spans residues Pro-47–Pro-108. The segment covering Ser-82–Asn-97 has biased composition (polar residues). A DNA-binding region (homeobox) is located at residues Lys-150–Asn-209. The interaction with DNA stretch occupies residues Tyr-153–Tyr-174. The interval Arg-192–Ala-203 is interaction with 5-mCpG DNA. A compositionally biased stretch (basic residues) spans Lys-204 to Met-213. The disordered stretch occupies residues Lys-204 to Ser-263. Composition is skewed to low complexity over residues Gln-214–Thr-233 and Ser-241–Ser-254.

This sequence belongs to the Caudal homeobox family.

It localises to the nucleus. Functionally, plays a role in transcriptional regulation. Involved in activated KRAS-mediated transcriptional activation of PRKD1. Binds to the PRKD1 promoter. Could play a role in the terminal differentiation of the intestine. Binds preferentially to methylated DNA. This is Homeobox protein CDX-1 (cdx1) from Xenopus laevis (African clawed frog).